The chain runs to 431 residues: Glutamate-1-semialdehyde 2,1-aminomutase (431 aa).

Lys269 carries the post-translational modification N6-(pyridoxal phosphate)lysine.

Belongs to the class-III pyridoxal-phosphate-dependent aminotransferase family. HemL subfamily. Homodimer. Requires pyridoxal 5'-phosphate as cofactor.

It is found in the cytoplasm. The enzyme catalyses (S)-4-amino-5-oxopentanoate = 5-aminolevulinate. It functions in the pathway porphyrin-containing compound metabolism; protoporphyrin-IX biosynthesis; 5-aminolevulinate from L-glutamyl-tRNA(Glu): step 2/2. The sequence is that of Glutamate-1-semialdehyde 2,1-aminomutase from Tolumonas auensis (strain DSM 9187 / NBRC 110442 / TA 4).